Consider the following 1087-residue polypeptide: MGTGDFICISMTGGAPWGFRLQGGKEEQQPLQVAKIRSQSKASGSGLREGDEVVSINGNPCADLTYPEVIKLMEGITDSLHLLVKRPSSGTSETLDSESETTNHQHLTHEGPMESTTLQIQQATETQSEDFFLAPVQTKVPLTEDQSNAWGYAECPKEEQAPPMLGSQEGHLVEEVILRQKAEAGQPGHVVELQLSLSKERHQCTSGPIVTLQGNDKSTSPDPDWSSQLERTVHINSIPAPEKADTSLTSSTSSGRELRVIQGRDPGGAGLPQVEVILDCSDRLKAEECRLQTGRGCVASPVEGGRSEAPPSLVSFAVSSEGTEHGEDQRSGKDQSRPHKHRARHARLRRSESLSEKQVKEAKSKCKSIALLLTDAPNPNSKGVLMFKKRRRRARKYTLVSYGTGELEREEEEEEDQEAGDKDEISEVAFLGTSESEVDEELLSDVDDNTQVVNFDWDSGLVDIEKRLNRGDKMEMLPDTTGKGALMFAKRRERMEQFTAQNEEEKTGGMAGGGPDALQTDGLRTMTSYQRKEESVRMQSSVSESSFQMGRSLASVPQQNGFSGVSETAGAQRMFPMNRTAKPFLGSMNQPAAPFSPTRSVTSPISDFPAPPPYSAVSPPPEAFSRGVSSPVAGPAQPPPWPQPAPWSQPAFYDSSEQIASRDERIAVPAKRTGILQEAKRRGTTKPMFTFKETKVSPNPELLSLLQNAEGKRGTGGDSGPEEDYLSLGAEACNFMQSSAKQKTPPPVAPKPAVKSPSSSQPVAPVSPVWSPGVAPAQRPAFSTSNPPNPPQVTAVSSIKIAQPAAPPARPASALNLAGPFKGPQAVVVSHNYTPKPSAPTPLVNAAPAGAGGPSNELPGMSGKGAQLFAKRQSRMEKYVVDSDTVQAHTVRAQSPTPSLPASWKYSSNVRAPPPVAYNPIHSPSYPLAAIKSQPPGAQASKTSKKKGKKPLNTLDVMKHQPYQLNASLFTFQPPDSKDGLPQKSTVKVSSAPAMKQALPPRQANVGSPTNAQASSVYSVPAYTSQPNFFAAEATSPVSASPVPVSVPTSPKQESTSTSYFVAPRPKFSAKKSGVTVQVWKPSVVEE.

The PDZ domain occupies 6–88; that stretch reads FICISMTGGA…SLHLLVKRPS (83 aa). Disordered regions lie at residues 24-52, 88-112, and 207-272; these read GKEEQQPLQVAKIRSQSKASGSGLREGDE, SSGTSETLDSESETTNHQHLTHEGP, and GPIV…AGLP. Residues 101 to 112 show a composition bias toward basic and acidic residues; the sequence is TTNHQHLTHEGP. Polar residues-rich tracts occupy residues 207–230 and 246–255; these read GPIVTLQGNDKSTSPDPDWSSQLE and TSLTSSTSSG. Phosphoserine occurs at positions 300, 319, and 320. The disordered stretch occupies residues 320–359; sequence SEGTEHGEDQRSGKDQSRPHKHRARHARLRRSESLSEKQV. Positions 322–337 are enriched in basic and acidic residues; the sequence is GTEHGEDQRSGKDQSR. Position 323 is a phosphothreonine (threonine 323). The span at 338 to 348 shows a compositional bias: basic residues; it reads PHKHRARHARL. The segment covering 349 to 359 has biased composition (basic and acidic residues); it reads RRSESLSEKQV. The Nuclear localization signal motif lies at 388–396; sequence KKRRRRARK. Residues serine 540, serine 541, serine 543, and serine 546 each carry the phosphoserine modification. An interaction with YWHAB region spans residues 551–557; that stretch reads RSLASVP. Position 555 is a phosphoserine; by PKA (serine 555). Disordered regions lie at residues 581–817 and 832–863; these read AKPF…ALNL and NYTPKPSAPTPLVNAAPAGAGGPSNELPGMSG. Position 596 is a phosphoserine (serine 596). The segment at 599–804 is interaction with YWHAB; that stretch reads RSVTSPISDF…AVSSIKIAQP (206 aa). Threonine 602 carries the phosphothreonine; by PKA and CaMK2 modification. Serine 603 is subject to Phosphoserine. Pro residues-rich tracts occupy residues 609–622 and 636–647; these read PAPPPYSAVSPPPE and AQPPPWPQPAPW. A PPPY motif motif is present at residues 611-614; the sequence is PPPY. Phosphotyrosine is present on tyrosine 614. Serine 618 carries the phosphoserine modification. The F-actin binding stretch occupies residues 656-796; sequence SEQIASRDER…PPNPPQVTAV (141 aa). Residues 656–909 are F-actin bundling activity; the sequence is SEQIASRDER…LPASWKYSSN (254 aa). Interaction with ACTN2 stretches follow at residues 656–917 and 894–1087; these read SEQI…PPVA and QSPT…VVEE. Serine 697 and serine 719 each carry phosphoserine. The tract at residues 740–893 is actin binding; the sequence is AKQKTPPPVA…DTVQAHTVRA (154 aa). Threonine 744 bears the Phosphothreonine mark. Residues 751-777 show a composition bias toward low complexity; that stretch reads KPAVKSPSSSQPVAPVSPVWSPGVAPA. Phosphoserine occurs at positions 767 and 771. Polar residues predominate over residues 781–797; it reads AFSTSNPPNPPQVTAVS. An interaction with FLNC region spans residues 803–1087; sequence QPAAPPARPA…QVWKPSVVEE (285 aa). Phosphoserine is present on residues serine 895, serine 899, and serine 903. 3 disordered regions span residues 930-952, 970-1012, and 1037-1060; these read AIKSQPPGAQASKTSKKKGKKPL, FTFQ…PTNA, and PVSASPVPVSVPTSPKQESTSTSY. Residues 993–1012 are interaction with ZYX; sequence PAMKQALPPRQANVGSPTNA. Phosphoserine is present on residues serine 1008 and serine 1050. Over residues 1037 to 1051 the composition is skewed to low complexity; it reads PVSASPVPVSVPTSP.

This sequence belongs to the synaptopodin family. May self-associate in muscle cells under oxidative stress. Binds F-actin. Interacts with ACTN2; ACTN2 is proposed to anchor SYOP2 at Z lines in mature myocytes. Interacts with AKAP6, PPP3CA and CAMK2A. Interacts (phosphorylated form) with YWHAB; YWHAB competes with ACTN2 for interaction with SYNPO2. Interacts with KPNA2; mediating nuclear import of SYNOP2; dependent on interaction with YWHAB. Interacts with IPO13; may be implicated in SYNOP2 nuclear import. Interacts with ZYX, FLNC, ILK. Interacts with BAG3 (via WW 1 domain). May associate with the CASA complex consisting of HSPA8, HSPB8 and BAG3. Interacts with VPS18. Post-translationally, phosphorylated by PKA, and by CaMK2 at multiple sites. Dephosphorylated by calcineurin at Ser-555 and Thr-602; abrogating interaction with YWHAB and impairing nuclear import. Expressed in skeletal muscle, heart, colon, stomach, uterus and lung. Expression is restricted to muscle cell layers in colon, uterus and stomach.

It localises to the nucleus. The protein localises to the cytoplasm. It is found in the myofibril. Its subcellular location is the sarcomere. The protein resides in the z line. It localises to the cell junction. The protein localises to the focal adhesion. Has an actin-binding and actin-bundling activity. Can induce the formation of F-actin networks. At the sarcomeric Z lines is proposed to act as adapter protein that links nascent myofibers to the sarcolemma via ZYX and may play a role in early assembly and stabilization of the Z lines. Involved in autophagosome formation. May play a role in chaperone-assisted selective autophagy (CASA) involved in Z lines maintenance in striated muscle under mechanical tension; may link the client-processing CASA chaperone machinery to a membrane-tethering and fusion complex providing autophagosome membranes. Involved in regulation of cell migration. May be a tumor suppressor. The protein is Synaptopodin-2 (Synpo2) of Mus musculus (Mouse).